A 413-amino-acid polypeptide reads, in one-letter code: UPF0754 membrane protein PCC7424_0748 (413 aa).

Transmembrane regions (helical) follow at residues 3 to 23 (IALE…GAII) and 391 to 411 (IVNL…VILL).

Belongs to the UPF0754 family.

It localises to the cell inner membrane. The sequence is that of UPF0754 membrane protein PCC7424_0748 from Gloeothece citriformis (strain PCC 7424) (Cyanothece sp. (strain PCC 7424)).